A 373-amino-acid polypeptide reads, in one-letter code: Putative F-box/kelch-repeat protein At3g19410 (373 aa).

Residues 1–46 (MTIPELPKDLIEEILCYVPATYLKRLRSTCKGWNRLFKDDRRFAKK) form the F-box domain. 3 Kelch repeats span residues 101–148 (RIFH…FVLG), 149–200 (YYQE…QCVS), and 329–373 (KLYI…EEKS).

This Arabidopsis thaliana (Mouse-ear cress) protein is Putative F-box/kelch-repeat protein At3g19410.